A 589-amino-acid polypeptide reads, in one-letter code: V-type ATP synthase alpha chain (589 aa).

232 to 239 lines the ATP pocket; it reads GPFGSGKT.

It belongs to the ATPase alpha/beta chains family.

It carries out the reaction ATP + H2O + 4 H(+)(in) = ADP + phosphate + 5 H(+)(out). Produces ATP from ADP in the presence of a proton gradient across the membrane. The V-type alpha chain is a catalytic subunit. The chain is V-type ATP synthase alpha chain from Acetivibrio thermocellus (strain ATCC 27405 / DSM 1237 / JCM 9322 / NBRC 103400 / NCIMB 10682 / NRRL B-4536 / VPI 7372) (Clostridium thermocellum).